Consider the following 210-residue polypeptide: RNA chaperone ProQ (210 aa).

A disordered region spans residues 118–146 (KAAKPEKKRPARRVAAKGQHAKETTTNKA). Basic residues predominate over residues 123–132 (EKKRPARRVA).

The protein belongs to the ProQ family.

The protein localises to the cytoplasm. RNA chaperone with significant RNA binding, RNA strand exchange and RNA duplexing activities. The polypeptide is RNA chaperone ProQ (Pasteurella multocida (strain Pm70)).